We begin with the raw amino-acid sequence, 248 residues long: Type III pantothenate kinase (248 aa).

An ATP-binding site is contributed by 6–13 (DCGNSLIK). Residues Y92 and 99–102 (GLDR) each bind substrate. Catalysis depends on D101, which acts as the Proton acceptor. D121 serves as a coordination point for K(+). An ATP-binding site is contributed by T124. T180 is a substrate binding site.

Belongs to the type III pantothenate kinase family. As to quaternary structure, homodimer. It depends on NH4(+) as a cofactor. Requires K(+) as cofactor.

It localises to the cytoplasm. It carries out the reaction (R)-pantothenate + ATP = (R)-4'-phosphopantothenate + ADP + H(+). Its pathway is cofactor biosynthesis; coenzyme A biosynthesis; CoA from (R)-pantothenate: step 1/5. Its function is as follows. Catalyzes the phosphorylation of pantothenate (Pan), the first step in CoA biosynthesis. This Pseudomonas aeruginosa (strain LESB58) protein is Type III pantothenate kinase.